Consider the following 682-residue polypeptide: Potassium-transporting ATPase ATP-binding subunit (682 aa).

4 consecutive transmembrane segments (helical) span residues 34–54 (PVMFIVWIGSLLTTCISIAMA), 62–82 (ALFSAAISGWLWITVLFANFA), 219–239 (IALTILLIALTIVFLLATATL), and 254–274 (VLVALLVCLIPTTIGGLLSAI). Aspartate 307 serves as the catalytic 4-aspartylphosphate intermediate. ATP is bound by residues aspartate 344, glutamate 348, 377–384 (FTAQSRMS), and lysine 395. Residues aspartate 518 and aspartate 522 each contribute to the Mg(2+) site. A run of 3 helical transmembrane segments spans residues 588–608 (FAIIPAAFAATYPQLNALNIM), 616–636 (AILSAVIFNALIIVFLIPLAL), and 656–676 (IYGLGGLLVPFIGIKVIDLLL).

Belongs to the cation transport ATPase (P-type) (TC 3.A.3) family. Type IA subfamily. In terms of assembly, the system is composed of three essential subunits: KdpA, KdpB and KdpC.

The protein resides in the cell inner membrane. The catalysed reaction is K(+)(out) + ATP + H2O = K(+)(in) + ADP + phosphate + H(+). In terms of biological role, part of the high-affinity ATP-driven potassium transport (or Kdp) system, which catalyzes the hydrolysis of ATP coupled with the electrogenic transport of potassium into the cytoplasm. This subunit is responsible for energy coupling to the transport system and for the release of the potassium ions to the cytoplasm. The sequence is that of Potassium-transporting ATPase ATP-binding subunit from Escherichia coli (strain ATCC 8739 / DSM 1576 / NBRC 3972 / NCIMB 8545 / WDCM 00012 / Crooks).